Reading from the N-terminus, the 247-residue chain is 3-deoxy-manno-octulosonate cytidylyltransferase (247 aa).

Belongs to the KdsB family.

The protein localises to the cytoplasm. The catalysed reaction is 3-deoxy-alpha-D-manno-oct-2-ulosonate + CTP = CMP-3-deoxy-beta-D-manno-octulosonate + diphosphate. The protein operates within nucleotide-sugar biosynthesis; CMP-3-deoxy-D-manno-octulosonate biosynthesis; CMP-3-deoxy-D-manno-octulosonate from 3-deoxy-D-manno-octulosonate and CTP: step 1/1. Its pathway is bacterial outer membrane biogenesis; lipopolysaccharide biosynthesis. In terms of biological role, activates KDO (a required 8-carbon sugar) for incorporation into bacterial lipopolysaccharide in Gram-negative bacteria. The chain is 3-deoxy-manno-octulosonate cytidylyltransferase from Afipia carboxidovorans (strain ATCC 49405 / DSM 1227 / KCTC 32145 / OM5) (Oligotropha carboxidovorans).